Here is a 287-residue protein sequence, read N- to C-terminus: ATP synthase gamma chain (287 aa).

Belongs to the ATPase gamma chain family. F-type ATPases have 2 components, CF(1) - the catalytic core - and CF(0) - the membrane proton channel. CF(1) has five subunits: alpha(3), beta(3), gamma(1), delta(1), epsilon(1). CF(0) has three main subunits: a, b and c.

It is found in the cell inner membrane. Its function is as follows. Produces ATP from ADP in the presence of a proton gradient across the membrane. The gamma chain is believed to be important in regulating ATPase activity and the flow of protons through the CF(0) complex. The protein is ATP synthase gamma chain of Edwardsiella ictaluri (strain 93-146).